The following is a 257-amino-acid chain: 5-oxoprolinase subunit A (257 aa).

This sequence belongs to the LamB/PxpA family. Forms a complex composed of PxpA, PxpB and PxpC.

It carries out the reaction 5-oxo-L-proline + ATP + 2 H2O = L-glutamate + ADP + phosphate + H(+). Its function is as follows. Catalyzes the cleavage of 5-oxoproline to form L-glutamate coupled to the hydrolysis of ATP to ADP and inorganic phosphate. This chain is 5-oxoprolinase subunit A, found in Halalkalibacterium halodurans (strain ATCC BAA-125 / DSM 18197 / FERM 7344 / JCM 9153 / C-125) (Bacillus halodurans).